The sequence spans 380 residues: 5-amino-6-(D-ribitylamino)uracil--L-tyrosine 4-hydroxyphenyl transferase (380 aa).

Positions 56-303 (VTYIINRNIN…GAVARIYLGN (248 aa)) constitute a Radical SAM core domain. Positions 70, 74, and 77 each coordinate [4Fe-4S] cluster.

This sequence belongs to the radical SAM superfamily. CofH family. In terms of assembly, consists of two subunits, CofG and CofH. [4Fe-4S] cluster is required as a cofactor.

It carries out the reaction 5-amino-6-(D-ribitylamino)uracil + L-tyrosine + S-adenosyl-L-methionine = 5-amino-5-(4-hydroxybenzyl)-6-(D-ribitylimino)-5,6-dihydrouracil + 2-iminoacetate + 5'-deoxyadenosine + L-methionine + H(+). It functions in the pathway cofactor biosynthesis; coenzyme F0 biosynthesis. Catalyzes the radical-mediated synthesis of 5-amino-5-(4-hydroxybenzyl)-6-(D-ribitylimino)-5,6-dihydrouracil from 5-amino-6-(D-ribitylamino)uracil and L-tyrosine. The sequence is that of 5-amino-6-(D-ribitylamino)uracil--L-tyrosine 4-hydroxyphenyl transferase from Nostoc punctiforme (strain ATCC 29133 / PCC 73102).